Consider the following 315-residue polypeptide: MESDLTTEHHLPFIRIHKNGRVERLSGNDIKPTSLNPQNDVVSKDVMYSSDHNLSVRMFLPNKSRKLDTAGNKIPLLIYFHGGAYIIQSPFSPVYHNYLTEVVITANCLAVSVQYRLAPEHPVPAAYDDSWSAIQWIFSHSDDWINEYADFDRVFIAGDSAGANISHHMGIRAGKEKLSPTIKGIVMVHPGFWGKEPIDEHDVQDGEVRNKIAYIWENIVSPNSVDGVNDPWFNVVGSGSDVSEMGCEKVLVAVAGKDVFWRQGLAYAAKLEKSQWKGSVEVIEEEEEGHCFHLHNHNSQNASKLMQKFLEFIIS.

Residue methionine 1 is modified to N-acetylmethionine. Residues 81-83 (HGG) carry the Involved in the stabilization of the negatively charged intermediate by the formation of the oxyanion hole motif. Catalysis depends on residues serine 160, aspartate 258, and histidine 290.

Belongs to the 'GDXG' lipolytic enzyme family. As to expression, expressed in flowers and siliques.

The catalysed reaction is a carboxylic ester + H2O = an alcohol + a carboxylate + H(+). Carboxylesterase acting on esters with varying acyl chain length. The protein is Probable carboxylesterase 3 (CXE3) of Arabidopsis thaliana (Mouse-ear cress).